The primary structure comprises 367 residues: Centromere protein L (367 aa).

This sequence belongs to the CENP-L/IML3 family.

Its subcellular location is the nucleus. The protein resides in the chromosome. It localises to the centromere. In terms of biological role, probable component of a centromeric complex involved in assembly of kinetochore proteins, mitotic progression and chromosome segregation. The polypeptide is Centromere protein L (cenpl) (Danio rerio (Zebrafish)).